Reading from the N-terminus, the 396-residue chain is S-adenosylmethionine synthase (396 aa).

Histidine 16 contributes to the ATP binding site. Aspartate 18 is a Mg(2+) binding site. K(+) is bound at residue glutamate 44. Residues glutamate 57 and glutamine 100 each contribute to the L-methionine site. The flexible loop stretch occupies residues 100–110 (QSPDIAQGVDR). ATP is bound by residues 167 to 169 (DAK), 233 to 234 (RF), aspartate 242, 248 to 249 (RK), alanine 265, and lysine 269. L-methionine is bound at residue aspartate 242. Residue lysine 273 participates in L-methionine binding.

It belongs to the AdoMet synthase family. As to quaternary structure, homotetramer; dimer of dimers. It depends on Mg(2+) as a cofactor. The cofactor is K(+).

The protein resides in the cytoplasm. The enzyme catalyses L-methionine + ATP + H2O = S-adenosyl-L-methionine + phosphate + diphosphate. It functions in the pathway amino-acid biosynthesis; S-adenosyl-L-methionine biosynthesis; S-adenosyl-L-methionine from L-methionine: step 1/1. Catalyzes the formation of S-adenosylmethionine (AdoMet) from methionine and ATP. The overall synthetic reaction is composed of two sequential steps, AdoMet formation and the subsequent tripolyphosphate hydrolysis which occurs prior to release of AdoMet from the enzyme. This Paraburkholderia phytofirmans (strain DSM 17436 / LMG 22146 / PsJN) (Burkholderia phytofirmans) protein is S-adenosylmethionine synthase.